Here is a 444-residue protein sequence, read N- to C-terminus: Glucoside xylosyltransferase 2 (444 aa).

Over 1-4 the chain is Cytoplasmic; it reads MKLR. The chain crosses the membrane as a helical; Signal-anchor for type II membrane protein span at residues 5-25; the sequence is SKAAALLLLALAVLLLALLSL. The Lumenal segment spans residues 26–444; it reads RARRDPEPPG…IIHMGPNPMS (419 aa). Residues 31-101 form a disordered region; it reads PEPPGFPARP…LARRPGETRS (71 aa). A compositionally biased stretch (basic residues) spans 68-83; it reads RSPRRQPPRLRPRAGR. Over residues 87–101 the composition is skewed to basic and acidic residues; that stretch reads ASREKLARRPGETRS. Asn275 carries an N-linked (GlcNAc...) asparagine glycan.

The protein belongs to the glycosyltransferase 8 family.

It is found in the membrane. It catalyses the reaction 3-O-(beta-D-glucosyl)-L-seryl-[EGF-like domain protein] + UDP-alpha-D-xylose = 3-O-[alpha-D-xylosyl-(1-&gt;3)-beta-D-glucosyl]-L-seryl-[EGF-like domain protein] + UDP + H(+). Glycosyltransferase which elongates the O-linked glucose attached to EGF-like repeats in the extracellular domain of Notch proteins by catalyzing the addition of xylose. This Mus musculus (Mouse) protein is Glucoside xylosyltransferase 2 (Gxylt2).